The sequence spans 112 residues: ATP synthase epsilon chain (112 aa).

The protein belongs to the ATPase epsilon chain family. F-type ATPases have 2 components, CF(1) - the catalytic core - and CF(0) - the membrane proton channel. CF(1) has five subunits: alpha(3), beta(3), gamma(1), delta(1), epsilon(1). CF(0) has three main subunits: a, b and c.

It localises to the cell inner membrane. Its function is as follows. Produces ATP from ADP in the presence of a proton gradient across the membrane. This is ATP synthase epsilon chain (atpC) from Rickettsia prowazekii (strain Madrid E).